A 412-amino-acid chain; its full sequence is Probable tRNA sulfurtransferase (412 aa).

In terms of domain architecture, THUMP spans 58-163 (DEVIKQLGYV…SEGTYIYVGK (106 aa)). Residues 181–182 (ML), 206–207 (HF), Arg-265, Gly-287, and Gln-296 each bind ATP.

The protein belongs to the ThiI family.

It localises to the cytoplasm. The enzyme catalyses [ThiI sulfur-carrier protein]-S-sulfanyl-L-cysteine + a uridine in tRNA + 2 reduced [2Fe-2S]-[ferredoxin] + ATP + H(+) = [ThiI sulfur-carrier protein]-L-cysteine + a 4-thiouridine in tRNA + 2 oxidized [2Fe-2S]-[ferredoxin] + AMP + diphosphate. It carries out the reaction [ThiS sulfur-carrier protein]-C-terminal Gly-Gly-AMP + S-sulfanyl-L-cysteinyl-[cysteine desulfurase] + AH2 = [ThiS sulfur-carrier protein]-C-terminal-Gly-aminoethanethioate + L-cysteinyl-[cysteine desulfurase] + A + AMP + 2 H(+). It participates in cofactor biosynthesis; thiamine diphosphate biosynthesis. Catalyzes the ATP-dependent transfer of a sulfur to tRNA to produce 4-thiouridine in position 8 of tRNAs, which functions as a near-UV photosensor. Also catalyzes the transfer of sulfur to the sulfur carrier protein ThiS, forming ThiS-thiocarboxylate. This is a step in the synthesis of thiazole, in the thiamine biosynthesis pathway. The sulfur is donated as persulfide by IscS. The polypeptide is Probable tRNA sulfurtransferase (Acholeplasma laidlawii (strain PG-8A)).